Consider the following 1237-residue polypeptide: Glutamate receptor ionotropic, NMDA 2C (1237 aa).

A signal peptide spans 1-19; it reads MGGALGPALLLTSLLGAWA. Over 20 to 554 the chain is Extracellular; it reads RLGAGQGEQA…SAFLEPYSPA (535 aa). N-linked (GlcNAc...) asparagine glycosylation is found at N70 and N73. A disulfide bond links C82 and C317. 2 N-linked (GlcNAc...) asparagine glycosylation sites follow: N337 and N438. Cystine bridges form between C426–C453 and C433–C454. L-glutamate is bound by residues S509, T511, and R516. N539 is a glycosylation site (N-linked (GlcNAc...) asparagine). Residues 555 to 575 traverse the membrane as a helical segment; it reads VWVMMFVMCLTVVAITVFMFE. Residues 576 to 601 are Cytoplasmic-facing; it reads YFSPVSYNQNLTKGKKPGGPSFTIGK. A pore-forming region spans residues 601-620; it reads KSVWLLWALVFNNSVPIENP. Positions 602–611 form an intramembrane region, discontinuously helical; it reads SVWLLWALVF. The Cytoplasmic portion of the chain corresponds to 612–622; it reads NNSVPIENPRG. A helical transmembrane segment spans residues 623-644; the sequence is TTSKIMVLVWAFFAVIFLASYT. At 645-813 the chain is on the extracellular side; that stretch reads ANLAAFMIQE…EVMSSKLDID (169 aa). N685 carries N-linked (GlcNAc...) asparagine glycosylation. Residues S687, T688, and D729 each contribute to the L-glutamate site. A disulfide bridge links C743 with C798. A helical membrane pass occupies residues 814–833; it reads NMAGVFYMLLVAMGLALLVF. Residues 834–1237 lie on the Cytoplasmic side of the membrane; it reads AWEHLVYWKL…RRVSSLESEV (404 aa). Residues S875, S881, and S912 each carry the phosphoserine modification. Positions 907-925 are enriched in polar residues; sequence ADVSSSLDRATRTIENWGN. The interval 907 to 990 is disordered; that stretch reads ADVSSSLDRA…LPDVSRPSCR (84 aa). Positions 930-941 are enriched in low complexity; it reads PAPTASGPRSST. The span at 968-982 shows a compositional bias: pro residues; sequence PQPPARPATCGPPLP. The PDZ-binding signature appears at 1235 to 1237; that stretch reads SEV.

It belongs to the glutamate-gated ion channel (TC 1.A.10.1) family. NR2C/GRIN2C subfamily. In terms of assembly, heterotetramer. Forms heterotetrameric channels composed of two GluN1/zeta subunits (GRIN1), and two identical GluN2/epsilon subunits (GRIN2A, GRIN2B, GRIN2C or GRIN2D) or GluN3 subunits (GRIN3A or GRIN3B) (in vitro). In vivo, the subunit composition may depend on the expression levels of the different subunits. Interacts with PDZ domains of PATJ and DLG4. Interacts (via PDZ-binding motif) with SNX27 (via PDZ domain); the interaction is required for recycling to the plasma membrane when endocytosed and prevent degradation in lysosomes. In terms of tissue distribution, detected in cerebellum.

It localises to the cell membrane. Its subcellular location is the postsynaptic cell membrane. The catalysed reaction is Ca(2+)(in) = Ca(2+)(out). It catalyses the reaction Na(+)(in) = Na(+)(out). It carries out the reaction K(+)(in) = K(+)(out). Functionally, component of N-methyl-D-aspartate (NMDA) receptors (NMDARs) that function as heterotetrameric, ligand-gated cation channels with high calcium permeability and voltage-dependent block by Mg(2+). Participates in synaptic plasticity for learning and memory formation by contributing to the slow phase of excitatory postsynaptic current and long-term synaptic potentiation. Channel activation requires binding of the neurotransmitter L-glutamate to the GluN2 subunit, glycine or D-serine binding to the GluN1 subunit, plus membrane depolarization to eliminate channel inhibition by Mg(2+). NMDARs mediate simultaneously the potasium efflux and the influx of calcium and sodium. Each GluN2 subunit confers differential attributes to channel properties, including activation, deactivation and desensitization kinetics, pH sensitivity, Ca2(+) permeability, and binding to allosteric modulators. The polypeptide is Glutamate receptor ionotropic, NMDA 2C (Rattus norvegicus (Rat)).